A 409-amino-acid polypeptide reads, in one-letter code: Tryptophan synthase beta chain (409 aa).

Residue K86 is modified to N6-(pyridoxal phosphate)lysine.

This sequence belongs to the TrpB family. Tetramer of two alpha and two beta chains. Pyridoxal 5'-phosphate is required as a cofactor.

The enzyme catalyses (1S,2R)-1-C-(indol-3-yl)glycerol 3-phosphate + L-serine = D-glyceraldehyde 3-phosphate + L-tryptophan + H2O. It participates in amino-acid biosynthesis; L-tryptophan biosynthesis; L-tryptophan from chorismate: step 5/5. The beta subunit is responsible for the synthesis of L-tryptophan from indole and L-serine. The protein is Tryptophan synthase beta chain of Shewanella pealeana (strain ATCC 700345 / ANG-SQ1).